The primary structure comprises 644 residues: Chaperone protein DnaK (644 aa).

Thr199 is subject to Phosphothreonine; by autocatalysis. The interval 605–644 is disordered; that stretch reads KKSSEGQAAQGQTQSQESTKPAEEGVVDAEFEEVKEEDKK. A compositionally biased stretch (polar residues) spans 609–623; sequence EGQAAQGQTQSQEST. The segment covering 629–644 has biased composition (acidic residues); sequence GVVDAEFEEVKEEDKK.

Belongs to the heat shock protein 70 family.

Acts as a chaperone. The polypeptide is Chaperone protein DnaK (Legionella pneumophila subsp. pneumophila (strain Philadelphia 1 / ATCC 33152 / DSM 7513)).